We begin with the raw amino-acid sequence, 54 residues long: Rubredoxin-1 (54 aa).

The 52-residue stretch at 1–52 folds into the Rubredoxin-like domain; that stretch reads MKKWECVVCGFIYDEAEGLPDEGIEPGTAWNNVPEDWVCPDCGVGKDDFEMV. Residues Cys-6, Cys-9, Cys-39, and Cys-42 each contribute to the Fe cation site.

This sequence belongs to the rubredoxin family. Fe(3+) serves as cofactor.

It is found in the cytoplasm. It functions in the pathway hydrocarbon metabolism; alkane degradation. Functionally, involved in the hydrocarbon hydroxylating system, which transfers electrons from NADH to rubredoxin reductase and then through rubredoxin to alkane 1 monooxygenase. The polypeptide is Rubredoxin-1 (rubA) (Alcanivorax borkumensis (strain ATCC 700651 / DSM 11573 / NCIMB 13689 / SK2)).